The primary structure comprises 216 residues: Somatotropin (216 aa).

A signal peptide spans 1-26 (MAADPQSSVLLAFALLCLPWPQEVGA). Residue H45 participates in Zn(2+) binding. A disulfide bridge connects residues C78 and C189. S131 carries the phosphoserine modification. E198 provides a ligand contact to Zn(2+). A disulfide bond links C206 and C214.

Belongs to the somatotropin/prolactin family.

It localises to the secreted. In terms of biological role, plays an important role in growth control. Its major role in stimulating body growth is to stimulate the liver and other tissues to secrete IGF1. It stimulates both the differentiation and proliferation of myoblasts. It also stimulates amino acid uptake and protein synthesis in muscle and other tissues. The polypeptide is Somatotropin (GH1) (Ailuropoda melanoleuca (Giant panda)).